The following is a 491-amino-acid chain: G2/mitotic-specific cyclin-2 (491 aa).

S2 carries the N-acetylserine modification. Disordered stretches follow at residues 59-107 and 164-184; these read EGSR…DPSS and HPAR…SGKK. A compositionally biased stretch (polar residues) spans 67 to 77; sequence TRESVSRSTAA.

The protein belongs to the cyclin family. Cyclin AB subfamily. As to quaternary structure, interacts with NAP1.

In terms of biological role, essential for the control of the cell cycle at the G2/M (mitosis) transition. Interacts with the CDC2 protein kinase to form MPF. G2/M cyclins accumulate steadily during G2 and are abruptly destroyed at mitosis. This chain is G2/mitotic-specific cyclin-2 (CLB2), found in Saccharomyces cerevisiae (strain ATCC 204508 / S288c) (Baker's yeast).